Reading from the N-terminus, the 74-residue chain is UPF0352 protein HAPS_0210 (74 aa).

It belongs to the UPF0352 family.

This Glaesserella parasuis serovar 5 (strain SH0165) (Haemophilus parasuis) protein is UPF0352 protein HAPS_0210.